The following is a 421-amino-acid chain: 4-hydroxy-3-methylbut-2-en-1-yl diphosphate synthase (flavodoxin) (421 aa).

Residues cysteine 311, cysteine 314, cysteine 357, and glutamate 364 each coordinate [4Fe-4S] cluster.

It belongs to the IspG family. [4Fe-4S] cluster is required as a cofactor.

It catalyses the reaction (2E)-4-hydroxy-3-methylbut-2-enyl diphosphate + oxidized [flavodoxin] + H2O + 2 H(+) = 2-C-methyl-D-erythritol 2,4-cyclic diphosphate + reduced [flavodoxin]. It participates in isoprenoid biosynthesis; isopentenyl diphosphate biosynthesis via DXP pathway; isopentenyl diphosphate from 1-deoxy-D-xylulose 5-phosphate: step 5/6. Its function is as follows. Converts 2C-methyl-D-erythritol 2,4-cyclodiphosphate (ME-2,4cPP) into 1-hydroxy-2-methyl-2-(E)-butenyl 4-diphosphate. The chain is 4-hydroxy-3-methylbut-2-en-1-yl diphosphate synthase (flavodoxin) from Xanthomonas euvesicatoria pv. vesicatoria (strain 85-10) (Xanthomonas campestris pv. vesicatoria).